The primary structure comprises 810 residues: Hemoglobin-haptoglobin utilization protein B (810 aa).

Residues Met1–Ala22 form the signal peptide. A TBDR plug domain is found at Asn34 to Lys166. One can recognise a TBDR beta-barrel domain in the interval Asp175–Phe810. Positions Gln793–Phe810 match the TonB C-terminal box motif.

The protein belongs to the TonB-dependent receptor family.

The protein localises to the cell outer membrane. Functionally, acts as a receptor for hemoglobin or the hemoglobin/haptoglobin complex and is required for heme uptake. The chain is Hemoglobin-haptoglobin utilization protein B (hpuB) from Neisseria meningitidis serogroup A / serotype 4A (strain DSM 15465 / Z2491).